We begin with the raw amino-acid sequence, 425 residues long: Histidine--tRNA ligase (425 aa).

This sequence belongs to the class-II aminoacyl-tRNA synthetase family. As to quaternary structure, homodimer.

The protein resides in the cytoplasm. The enzyme catalyses tRNA(His) + L-histidine + ATP = L-histidyl-tRNA(His) + AMP + diphosphate + H(+). The sequence is that of Histidine--tRNA ligase from Listeria monocytogenes serovar 1/2a (strain ATCC BAA-679 / EGD-e).